The sequence spans 234 residues: MAKLTKRMRVIRDKVDATKQYDINEAITLLKELATAKFVESVDVAVNLGIDARKSDQNVRGATVLPHGTGRSVRVAVFTQGPNAEAAKAAGAELVGMEDLAEQIKKGEMNFDVVIASPDAMRVVGQLGQVLGPRGLMPNPKVGTVTPNVAEAVKNAKAGQVRYRNDKNGIIHTTIGKVDFDADKLKENLEALLVALKKAKPSSAKGVYIKKVSLSTTMGAGVAVDQSGLSAAAN.

Belongs to the universal ribosomal protein uL1 family. In terms of assembly, part of the 50S ribosomal subunit.

Functionally, binds directly to 23S rRNA. The L1 stalk is quite mobile in the ribosome, and is involved in E site tRNA release. Its function is as follows. Protein L1 is also a translational repressor protein, it controls the translation of the L11 operon by binding to its mRNA. The chain is Large ribosomal subunit protein uL1 from Cronobacter sakazakii (strain ATCC BAA-894) (Enterobacter sakazakii).